A 460-amino-acid chain; its full sequence is Keratin, type I cytoskeletal 27 (460 aa).

Residues 1–83 are head; the sequence is MSVRFSSASR…GNEHGLLSGN (83 aa). Residues 84–119 form a coil 1A region; the sequence is EKVTMQNLNDRLASYLDNVRALEEANADLEQKIKGW. Residues 84–399 form the IF rod domain; the sequence is EKVTMQNLND…RLIDGEDGSC (316 aa). The linker 1 stretch occupies residues 120–141; that stretch reads YEKFGPGSCRGLDHDYSRYFTV. The segment at 142–233 is coil 1B; it reads IDDLRNQIIS…KNHEEEMKAL (92 aa). Positions 234-256 are linker 12; sequence QCAAGGNVNVEMNAAPGVDLTVL. Residues 257-395 are coil 2; sequence LNNMRAEYEA…ETYCRLIDGE (139 aa). The tract at residues 396 to 460 is tail; it reads DGSCAKSKGY…NVKSEQRVPS (65 aa). A disordered region spans residues 435-460; sequence LSSRVHSVEEKSTKVNNVKSEQRVPS. The segment covering 448–460 has biased composition (polar residues); sequence KVNNVKSEQRVPS.

This sequence belongs to the intermediate filament family. As to quaternary structure, heterotetramer of two type I and two type II keratins. Interacts with KRT6A to form filaments.

The protein resides in the cytoplasm. Its function is as follows. Essential for the proper assembly of type I and type II keratin protein complexes and formation of keratin intermediate filaments in the inner root sheath (irs). The polypeptide is Keratin, type I cytoskeletal 27 (Bos taurus (Bovine)).